Consider the following 308-residue polypeptide: Glutaminase (308 aa).

Substrate is bound by residues Ser-66, Asn-117, Glu-161, Asn-168, Tyr-192, Tyr-244, and Val-262.

It belongs to the glutaminase family. In terms of assembly, homotetramer.

The catalysed reaction is L-glutamine + H2O = L-glutamate + NH4(+). This chain is Glutaminase, found in Enterobacter sp. (strain 638).